Reading from the N-terminus, the 237-residue chain is 7-cyano-7-deazaguanine synthase (237 aa).

10–20 is an ATP binding site; it reads FSGGQDSTTCL. Residues Cys-189, Cys-198, Cys-201, and Cys-204 each coordinate Zn(2+).

Belongs to the QueC family. It depends on Zn(2+) as a cofactor.

It carries out the reaction 7-carboxy-7-deazaguanine + NH4(+) + ATP = 7-cyano-7-deazaguanine + ADP + phosphate + H2O + H(+). It participates in purine metabolism; 7-cyano-7-deazaguanine biosynthesis. Catalyzes the ATP-dependent conversion of 7-carboxy-7-deazaguanine (CDG) to 7-cyano-7-deazaguanine (preQ(0)). This is 7-cyano-7-deazaguanine synthase from Aeromonas salmonicida (strain A449).